The following is a 157-amino-acid chain: SsrA-binding protein (157 aa).

This sequence belongs to the SmpB family.

The protein localises to the cytoplasm. Required for rescue of stalled ribosomes mediated by trans-translation. Binds to transfer-messenger RNA (tmRNA), required for stable association of tmRNA with ribosomes. tmRNA and SmpB together mimic tRNA shape, replacing the anticodon stem-loop with SmpB. tmRNA is encoded by the ssrA gene; the 2 termini fold to resemble tRNA(Ala) and it encodes a 'tag peptide', a short internal open reading frame. During trans-translation Ala-aminoacylated tmRNA acts like a tRNA, entering the A-site of stalled ribosomes, displacing the stalled mRNA. The ribosome then switches to translate the ORF on the tmRNA; the nascent peptide is terminated with the 'tag peptide' encoded by the tmRNA and targeted for degradation. The ribosome is freed to recommence translation, which seems to be the essential function of trans-translation. The polypeptide is SsrA-binding protein (Lacticaseibacillus paracasei (strain ATCC 334 / BCRC 17002 / CCUG 31169 / CIP 107868 / KCTC 3260 / NRRL B-441) (Lactobacillus paracasei)).